A 349-amino-acid chain; its full sequence is S-adenosylmethionine:tRNA ribosyltransferase-isomerase (349 aa).

It belongs to the QueA family. In terms of assembly, monomer.

The protein localises to the cytoplasm. It carries out the reaction 7-aminomethyl-7-carbaguanosine(34) in tRNA + S-adenosyl-L-methionine = epoxyqueuosine(34) in tRNA + adenine + L-methionine + 2 H(+). The protein operates within tRNA modification; tRNA-queuosine biosynthesis. Its function is as follows. Transfers and isomerizes the ribose moiety from AdoMet to the 7-aminomethyl group of 7-deazaguanine (preQ1-tRNA) to give epoxyqueuosine (oQ-tRNA). This chain is S-adenosylmethionine:tRNA ribosyltransferase-isomerase, found in Parabacteroides distasonis (strain ATCC 8503 / DSM 20701 / CIP 104284 / JCM 5825 / NCTC 11152).